Consider the following 347-residue polypeptide: MIKEYYGAETFILNKDFAYILVIGTTDVSLIPGLTIAGATPELTHFTPAADAEYVLLGKCKSINTIPVSPTGIPTPALLTRASLSFINPLKIVVNAGSRIVPKIPYIDLQGEPGKDIRKQALSMEKVNNIIENSIKLGEELSNEYELIMIGESIPAGTTTAMATLLALGYDAMDKVSSASPDNPKELKRKVVEEALRNLPTDPLQRLAKVSDPVLLGVAGTSLGFKGKILLAGGTQMTAAAAIINEFDKNKLKDITIGTTKWIVEDKFADMLSLAKQVGVKVLASMLDLSISAYEGIRAYEKGYVKEGVGAGGSAIMALVRGVSNNTLVRKIDELYGELVGSNNLHI.

This sequence belongs to the UPF0284 family.

This Saccharolobus islandicus (strain M.16.4 / Kamchatka #3) (Sulfolobus islandicus) protein is UPF0284 protein M164_0030.